The primary structure comprises 249 residues: Coproheme decarboxylase (249 aa).

Residues Arg131, 145 to 149, His172, Gln185, and Ser223 contribute to the Fe-coproporphyrin III site; that span reads YPMDK. Tyr145 is a catalytic residue.

This sequence belongs to the ChdC family. Type 1 subfamily. Requires Fe-coproporphyrin III as cofactor.

The catalysed reaction is Fe-coproporphyrin III + 2 H2O2 + 2 H(+) = heme b + 2 CO2 + 4 H2O. It catalyses the reaction Fe-coproporphyrin III + H2O2 + H(+) = harderoheme III + CO2 + 2 H2O. It carries out the reaction harderoheme III + H2O2 + H(+) = heme b + CO2 + 2 H2O. It participates in porphyrin-containing compound metabolism; protoheme biosynthesis. Its function is as follows. Involved in coproporphyrin-dependent heme b biosynthesis. Catalyzes the decarboxylation of Fe-coproporphyrin III (coproheme) to heme b (protoheme IX), the last step of the pathway. The reaction occurs in a stepwise manner with a three-propionate intermediate. In Shouchella clausii (strain KSM-K16) (Alkalihalobacillus clausii), this protein is Coproheme decarboxylase.